The chain runs to 397 residues: Transcription factor TGAL6 (397 aa).

A bZIP domain is found at 104 to 148 (PDKVLRRLAQNREAARKSRLRKKAYIQQLETSRLKLAQLEQELQR). Residues 106 to 126 (KVLRRLAQNREAARKSRLRKK) form a basic motif region. The tract at residues 132–146 (LETSRLKLAQLEQEL) is leucine-zipper. The DOG1 domain maps to 175–390 (ALGFEIKYSH…RALSSLWAAR (216 aa)).

Belongs to the bZIP family.

The protein resides in the nucleus. Functionally, transcriptional regulator involved in defense response. The chain is Transcription factor TGAL6 from Oryza sativa subsp. japonica (Rice).